The chain runs to 88 residues: MVRIRLQRMGSKFNPFYKIVVADARAPRDGRFIEALGYYNPQQKFAKVNLEKTYRWLHIGAQVTQTVRNIFSKKGVFKNFLEQKSSRA.

The protein belongs to the bacterial ribosomal protein bS16 family.

The protein is Small ribosomal subunit protein bS16 of Mesomycoplasma hyopneumoniae (strain 232) (Mycoplasma hyopneumoniae).